The sequence spans 271 residues: Phosphonoacetaldehyde hydrolase (271 aa).

Aspartate 12 functions as the Nucleophile in the catalytic mechanism. Residues aspartate 12 and alanine 14 each coordinate Mg(2+). Lysine 54 (schiff-base intermediate with substrate) is an active-site residue. Residue aspartate 188 participates in Mg(2+) binding.

It belongs to the HAD-like hydrolase superfamily. PhnX family. As to quaternary structure, homodimer. Mg(2+) serves as cofactor.

The enzyme catalyses phosphonoacetaldehyde + H2O = acetaldehyde + phosphate + H(+). Functionally, involved in phosphonate degradation. This Vibrio parahaemolyticus serotype O3:K6 (strain RIMD 2210633) protein is Phosphonoacetaldehyde hydrolase.